A 514-amino-acid chain; its full sequence is Peptide chain release factor 3 (514 aa).

In terms of domain architecture, tr-type G spans 8–268 (KKRRTFAIIS…IFLKFAPEPH (261 aa)). Residues 17–24 (SHPDAGKT), 85–89 (DTPGH), and 139–142 (NKLD) contribute to the GTP site.

It belongs to the TRAFAC class translation factor GTPase superfamily. Classic translation factor GTPase family. PrfC subfamily.

The protein resides in the cytoplasm. Functionally, increases the formation of ribosomal termination complexes and stimulates activities of RF-1 and RF-2. It binds guanine nucleotides and has strong preference for UGA stop codons. It may interact directly with the ribosome. The stimulation of RF-1 and RF-2 is significantly reduced by GTP and GDP, but not by GMP. The sequence is that of Peptide chain release factor 3 from Streptococcus pneumoniae (strain P1031).